The chain runs to 124 residues: UPF0102 protein Mmc1_3298 (124 aa).

It belongs to the UPF0102 family.

The protein is UPF0102 protein Mmc1_3298 of Magnetococcus marinus (strain ATCC BAA-1437 / JCM 17883 / MC-1).